The chain runs to 458 residues: Cobyrinate a,c-diamide synthase (458 aa).

The region spanning 254-445 (KIGVIRDQVF…IHVHFLSDKS (192 aa)) is the GATase cobBQ-type domain. The active-site Nucleophile is the Cys335.

The protein belongs to the CobB/CbiA family. The cofactor is Mg(2+).

It catalyses the reaction cob(II)yrinate + 2 L-glutamine + 2 ATP + 2 H2O = cob(II)yrinate a,c diamide + 2 L-glutamate + 2 ADP + 2 phosphate + 2 H(+). It functions in the pathway cofactor biosynthesis; adenosylcobalamin biosynthesis; cob(II)yrinate a,c-diamide from sirohydrochlorin (anaerobic route): step 10/10. Functionally, catalyzes the ATP-dependent amidation of the two carboxylate groups at positions a and c of cobyrinate, using either L-glutamine or ammonia as the nitrogen source. This chain is Cobyrinate a,c-diamide synthase, found in Archaeoglobus fulgidus (strain ATCC 49558 / DSM 4304 / JCM 9628 / NBRC 100126 / VC-16).